The following is a 750-amino-acid chain: Photosystem I P700 chlorophyll a apoprotein A1 (750 aa).

A run of 8 helical transmembrane segments spans residues 70 to 93, 156 to 179, 195 to 219, 291 to 309, 346 to 369, 385 to 411, 433 to 455, and 531 to 549; these read VFSA…FHGA, LYCT…FHYH, LNHH…HVSL, IAHH…GHMY, WHAQ…HHMY, LSLF…IFMV, AIIS…LYIH, and FLVH…LILL. Positions 573 and 582 each coordinate [4Fe-4S] cluster. Helical transmembrane passes span 589-610 and 664-686; these read HVFL…HFSW and LSAY…MFLF. H675 contacts chlorophyll a'. Chlorophyll a is bound by residues M683 and Y691. A phylloquinone-binding site is contributed by W692. A helical membrane pass occupies residues 724–744; that stretch reads AVGVTHYLLGGIATTWAFFLA.

Belongs to the PsaA/PsaB family. As to quaternary structure, the PsaA/B heterodimer binds the P700 chlorophyll special pair and subsequent electron acceptors. PSI consists of a core antenna complex that captures photons, and an electron transfer chain that converts photonic excitation into a charge separation. The eukaryotic PSI reaction center is composed of at least 11 subunits. It depends on P700 is a chlorophyll a/chlorophyll a' dimer, A0 is one or more chlorophyll a, A1 is one or both phylloquinones and FX is a shared 4Fe-4S iron-sulfur center. as a cofactor.

Its subcellular location is the plastid. The protein localises to the chloroplast thylakoid membrane. It catalyses the reaction reduced [plastocyanin] + hnu + oxidized [2Fe-2S]-[ferredoxin] = oxidized [plastocyanin] + reduced [2Fe-2S]-[ferredoxin]. Its function is as follows. PsaA and PsaB bind P700, the primary electron donor of photosystem I (PSI), as well as the electron acceptors A0, A1 and FX. PSI is a plastocyanin-ferredoxin oxidoreductase, converting photonic excitation into a charge separation, which transfers an electron from the donor P700 chlorophyll pair to the spectroscopically characterized acceptors A0, A1, FX, FA and FB in turn. Oxidized P700 is reduced on the lumenal side of the thylakoid membrane by plastocyanin. This is Photosystem I P700 chlorophyll a apoprotein A1 from Lobularia maritima (Sweet alyssum).